We begin with the raw amino-acid sequence, 695 residues long: Glycine--tRNA ligase beta subunit (695 aa).

It belongs to the class-II aminoacyl-tRNA synthetase family. In terms of assembly, tetramer of two alpha and two beta subunits.

The protein localises to the cytoplasm. The enzyme catalyses tRNA(Gly) + glycine + ATP = glycyl-tRNA(Gly) + AMP + diphosphate. The polypeptide is Glycine--tRNA ligase beta subunit (Lawsonia intracellularis (strain PHE/MN1-00)).